The chain runs to 130 residues: MVKQIRKLTIKKAKWKASDGIVYIYATLNNTIITIVDTSGRVVSWSSAGICGFRGARKASPFAAKTAAEYAARQCINKGINRAQVLVKGLGTGRHTSIRGLQDAGLKISLIRDITTTPHNGCRQPKRRRV.

The protein belongs to the universal ribosomal protein uS11 family. Part of the 30S ribosomal subunit.

It localises to the plastid. The protein resides in the chloroplast. This chain is Small ribosomal subunit protein uS11c, found in Bigelowiella natans (Pedinomonas minutissima).